A 254-amino-acid polypeptide reads, in one-letter code: 14-3-3-like protein GF14 epsilon (254 aa).

Ser65 and Ser188 each carry phosphoserine.

It belongs to the 14-3-3 family. In terms of assembly, interacts with DREB1A and DREB1B in the nucleus. Interacts with CINV1.

It is found in the nucleus. Its subcellular location is the cytoplasm. Is associated with a DNA binding complex that binds to the G box, a well-characterized cis-acting DNA regulatory element found in plant genes. This Arabidopsis thaliana (Mouse-ear cress) protein is 14-3-3-like protein GF14 epsilon (GRF10).